A 150-amino-acid chain; its full sequence is S-protein homolog 28 (150 aa).

N-linked (GlcNAc...) asparagine glycosylation occurs at asparagine 122.

This sequence belongs to the plant self-incompatibility (S1) protein family.

It is found in the secreted. The polypeptide is S-protein homolog 28 (Arabidopsis thaliana (Mouse-ear cress)).